Consider the following 362-residue polypeptide: Molybdopterin synthase catalytic subunit (362 aa).

Residues 101-102, lysine 117, and 124-126 each bind substrate; these read HR and KKE.

It belongs to the MoaE family. MOCS2B subfamily. Heterotetramer; composed of 2 small (Mocs2A) and 2 large (Mocs2B) subunits.

It is found in the cytoplasm. The enzyme catalyses 2 [molybdopterin-synthase sulfur-carrier protein]-C-terminal-Gly-aminoethanethioate + cyclic pyranopterin phosphate + H2O = molybdopterin + 2 [molybdopterin-synthase sulfur-carrier protein]-C-terminal Gly-Gly + 2 H(+). It functions in the pathway cofactor biosynthesis; molybdopterin biosynthesis. Functionally, catalytic subunit of the molybdopterin synthase complex, a complex that catalyzes the conversion of precursor Z into molybdopterin. Acts by mediating the incorporation of 2 sulfur atoms from thiocarboxylated Mocs2A into precursor Z to generate a dithiolene group. This chain is Molybdopterin synthase catalytic subunit, found in Drosophila grimshawi (Hawaiian fruit fly).